Reading from the N-terminus, the 276-residue chain is DnaJ homolog subfamily C member 27-B (276 aa).

GTP is bound by residues 23-30, 71-75, and 137-140; these read GNAEVGKS, DMAGH, and NKID. A J domain is found at 220 to 276; that stretch reads DSWDMLGVKPGATRDEVNKAYRKLAVLLHPDKCVAPGSEDAFKAVVNARTALLKNIK.

It belongs to the small GTPase superfamily. Rab family.

Its subcellular location is the nucleus. GTPase possibly involved in regulation of the MEK/ERK pathway. The chain is DnaJ homolog subfamily C member 27-B (dnajc27-b) from Xenopus laevis (African clawed frog).